Consider the following 117-residue polypeptide: Ribosome-binding factor A (117 aa).

This sequence belongs to the RbfA family. As to quaternary structure, monomer. Binds 30S ribosomal subunits, but not 50S ribosomal subunits or 70S ribosomes.

The protein resides in the cytoplasm. Its function is as follows. One of several proteins that assist in the late maturation steps of the functional core of the 30S ribosomal subunit. Associates with free 30S ribosomal subunits (but not with 30S subunits that are part of 70S ribosomes or polysomes). Required for efficient processing of 16S rRNA. May interact with the 5'-terminal helix region of 16S rRNA. The chain is Ribosome-binding factor A from Leptospira interrogans serogroup Icterohaemorrhagiae serovar copenhageni (strain Fiocruz L1-130).